Consider the following 310-residue polypeptide: uncharacterized protein (310 aa).

His-239 is an active-site residue.

This sequence belongs to the IUNH family.

It localises to the cytoplasm. The protein resides in the nucleus. This is an uncharacterized protein from Schizosaccharomyces pombe (strain 972 / ATCC 24843) (Fission yeast).